The chain runs to 297 residues: Glycerol-3-phosphate dehydrogenase [NAD(P)+] (297 aa).

Residues W11, R33, and K79 each contribute to the NADPH site. Residues K79, G107, and S109 each contribute to the sn-glycerol 3-phosphate site. A111 is an NADPH binding site. Sn-glycerol 3-phosphate-binding residues include K161, D214, S224, R225, and N226. Residue K161 is the Proton acceptor of the active site. Residue R225 participates in NADPH binding. 2 residues coordinate NADPH: V249 and E251.

The protein belongs to the NAD-dependent glycerol-3-phosphate dehydrogenase family.

The protein resides in the cytoplasm. The catalysed reaction is sn-glycerol 3-phosphate + NAD(+) = dihydroxyacetone phosphate + NADH + H(+). The enzyme catalyses sn-glycerol 3-phosphate + NADP(+) = dihydroxyacetone phosphate + NADPH + H(+). Its pathway is membrane lipid metabolism; glycerophospholipid metabolism. In terms of biological role, catalyzes the reduction of the glycolytic intermediate dihydroxyacetone phosphate (DHAP) to sn-glycerol 3-phosphate (G3P), the key precursor for phospholipid synthesis. The polypeptide is Glycerol-3-phosphate dehydrogenase [NAD(P)+] (Campylobacter jejuni subsp. jejuni serotype O:23/36 (strain 81-176)).